The sequence spans 352 residues: Protein RecA (352 aa).

74-81 (GPESSGKT) is an ATP binding site.

Belongs to the RecA family.

The protein resides in the cytoplasm. Functionally, can catalyze the hydrolysis of ATP in the presence of single-stranded DNA, the ATP-dependent uptake of single-stranded DNA by duplex DNA, and the ATP-dependent hybridization of homologous single-stranded DNAs. It interacts with LexA causing its activation and leading to its autocatalytic cleavage. This is Protein RecA from Ralstonia nicotianae (strain ATCC BAA-1114 / GMI1000) (Ralstonia solanacearum).